Here is a 97-residue protein sequence, read N- to C-terminus: RNA-binding protein Hfq (97 aa).

The 61-residue stretch at 10 to 70 (DPFLNALRKE…ISTIVPARSV (61 aa)) folds into the Sm domain. Residues 74–97 (HENRPQAAPTSTLVQVETVQQPAE) are disordered. The span at 81 to 97 (APTSTLVQVETVQQPAE) shows a compositional bias: polar residues.

This sequence belongs to the Hfq family. Homohexamer.

Functionally, RNA chaperone that binds small regulatory RNA (sRNAs) and mRNAs to facilitate mRNA translational regulation in response to envelope stress, environmental stress and changes in metabolite concentrations. Also binds with high specificity to tRNAs. The polypeptide is RNA-binding protein Hfq (Neisseria meningitidis serogroup A / serotype 4A (strain DSM 15465 / Z2491)).